Consider the following 632-residue polypeptide: MDPLKPPREEFEKFVAEVAYAIGIGEVPEIERSKRFGYFSAKFHKYRVDAGKLKETVDSLKSRQFKYLTSISVDGLYLNVDLAVEKVAELTFRAVAEMGDKYGFTDECKIGSFLVEHTSANPIHPLHIGHGRNAILGDSLVRLLRFCGNVVQSHFYVDDCGVQVMYAAIGYNVVKKYVDEVLKRTKPDVVIGAIYSAVNAIAEINRLKKELEKEKDDEKRREIINEIDSWVSVLKRLIDTEGEVINKLVEVLGQRNIVEEAAELNKRYETGDPEVKKIVREVVELVLKGQRETLARLGIELDSWDYESDIAVWSGEATRVVSELRRRWPQYIDDRGGAVVFRADKFVEDFKLWDVLDLPKFIPPVTLTRSDGTTLYVTRDVAYALWQARRGFDKVIRVISTEQTHEQAHVRIILYALGYEDVAKKLIHYAYEMVNLPGMKMSARRGQYISLDEILDEAVERSADLVKEKNPEIAGIIAERVGVGSVRYAFLSTSPRKPIEFKWETVLNMRQNSGPFLQYTYVRAYSILEKAQEIDLKKVAIPKEILPEERELILKVAEWPSVVREATRALRPDYVAEFLDGLALIFNSYYEKAPVLKTEEPVRSFRLALVNSVKTVLAAGFYILGIPTLTKM.

Positions 120–130 (ANPIHPLHIGH) match the 'HIGH' region motif.

The protein belongs to the class-I aminoacyl-tRNA synthetase family.

It is found in the cytoplasm. The enzyme catalyses tRNA(Arg) + L-arginine + ATP = L-arginyl-tRNA(Arg) + AMP + diphosphate. This chain is Arginine--tRNA ligase, found in Pyrobaculum islandicum (strain DSM 4184 / JCM 9189 / GEO3).